Reading from the N-terminus, the 152-residue chain is UPF0266 membrane protein YobD (152 aa).

A run of 3 helical transmembrane segments spans residues leucine 6–methionine 26, isoleucine 45–histidine 65, and alanine 67–isoleucine 87.

It belongs to the UPF0266 family.

Its subcellular location is the cell inner membrane. In Escherichia coli O157:H7 (strain EC4115 / EHEC), this protein is UPF0266 membrane protein YobD.